The sequence spans 325 residues: uncharacterized protein (325 aa).

A disordered region spans residues 1–75; sequence MSQPPEHPGN…PPPGYPTHLQ (75 aa). Positions 24 to 70 are enriched in pro residues; that stretch reads YPPPGYGAPPPPPGYGPPPGTYLPPGYNAPPPPPGYGPPPGPPPPGY. A run of 4 helical transmembrane segments spans residues 96-116, 153-173, 205-225, and 273-293; these read AVTL…VIGA, IVMF…HAGI, LLIV…GLIF, and LVGE…AALI.

To M.tuberculosis Rv2560.

It is found in the cell membrane. This is an uncharacterized protein from Mycobacterium bovis (strain ATCC BAA-935 / AF2122/97).